Reading from the N-terminus, the 186-residue chain is Elongation factor P (186 aa).

Belongs to the elongation factor P family.

Its subcellular location is the cytoplasm. The protein operates within protein biosynthesis; polypeptide chain elongation. Functionally, involved in peptide bond synthesis. Stimulates efficient translation and peptide-bond synthesis on native or reconstituted 70S ribosomes in vitro. Probably functions indirectly by altering the affinity of the ribosome for aminoacyl-tRNA, thus increasing their reactivity as acceptors for peptidyl transferase. The sequence is that of Elongation factor P from Brucella abortus (strain S19).